Reading from the N-terminus, the 278-residue chain is MCRRPDCGFSFSPGPVVLLWCCLLLPIVSSVAVSVAPTAAEKVPAECPELTRRCLLGEVFQGDKYESWLRPLVNVTRRDGPLSQLIRYRPVTPEAANSVLLDDAFLDTLALLYNNPDQLRALLTLLSSDTAPRWMTVMRGYSECGDGSPAVYTCVDDLCRGYDLTRLSYGRSIFTEHVLGFELVPPSLFNVVVAIRNEATRTNRAVRLPVSTAAAPEGITLFYGLYNAVKEFCLRHQLDPPLLRHLDKYYAGLPPELKQTRVNLPAHSRYGPQAVDAR.

A signal peptide spans 1 to 30 (MCRRPDCGFSFSPGPVVLLWCCLLLPIVSS). The 214-residue stretch at 43-256 (VPAECPELTR…DKYYAGLPPE (214 aa)) folds into the gL betaherpesvirus-type domain. Cys154 and Cys159 are joined by a disulfide.

Belongs to the herpesviridae glycoprotein L (gL) family. Betaherpesvirinae gL subfamily. In terms of assembly, interacts with glycoprotein H (gH); this interaction is necessary for the correct processing and cell surface expression of gH. Forms the envelope pentamer complex (PC) composed of gH, gL, UL128, UL130, and UL131A. The pentamer interacts with host NRP2. Forms the envelope trimer complex composed of gH, gL, and gO. The trimer interacts with host PDGFRA.

It is found in the virion membrane. The protein resides in the host cell membrane. Its subcellular location is the host Golgi apparatus. It localises to the host trans-Golgi network. The heterodimer glycoprotein H-glycoprotein L is required for the fusion of viral and plasma membranes leading to virus entry into the host cell. Acts as a functional inhibitor of gH and maintains gH in an inhibited form. Upon binding to host integrins, gL dissociates from gH leading to activation of the viral fusion glycoproteins gB and gH. In human cytomegalovirus, forms two distincts complexes to mediate viral entry, a trimer and a pentamer at the surface of the virion envelope. The gH-gL-gO trimer is required for infection in fibroblasts by interacting with host PDGFRA. The gH-gL-UL128-UL130-UL131A pentamer is essential for viral entry in epithelial, endothelial and myeloid cells via interaction with host NRP2. This chain is Envelope glycoprotein L, found in Human cytomegalovirus (strain AD169) (HHV-5).